A 600-amino-acid chain; its full sequence is Proline--tRNA ligase (600 aa).

The protein belongs to the class-II aminoacyl-tRNA synthetase family. ProS type 1 subfamily. In terms of assembly, homodimer.

The protein resides in the cytoplasm. The catalysed reaction is tRNA(Pro) + L-proline + ATP = L-prolyl-tRNA(Pro) + AMP + diphosphate. Its function is as follows. Catalyzes the attachment of proline to tRNA(Pro) in a two-step reaction: proline is first activated by ATP to form Pro-AMP and then transferred to the acceptor end of tRNA(Pro). As ProRS can inadvertently accommodate and process non-cognate amino acids such as alanine and cysteine, to avoid such errors it has two additional distinct editing activities against alanine. One activity is designated as 'pretransfer' editing and involves the tRNA(Pro)-independent hydrolysis of activated Ala-AMP. The other activity is designated 'posttransfer' editing and involves deacylation of mischarged Ala-tRNA(Pro). The misacylated Cys-tRNA(Pro) is not edited by ProRS. The protein is Proline--tRNA ligase of Synechococcus sp. (strain ATCC 27144 / PCC 6301 / SAUG 1402/1) (Anacystis nidulans).